The chain runs to 346 residues: Cyclin-dependent kinase 7 (346 aa).

At Ala-2 the chain carries N-acetylalanine. Position 7 is a phosphoserine (Ser-7). Positions 12-295 (YEKLDFLGEG…ATQALKMKYF (284 aa)) constitute a Protein kinase domain. Residues 18 to 26 (LGEGQFATV) and Lys-41 contribute to the ATP site. Asp-137 (proton acceptor) is an active-site residue. Ser-164 carries the post-translational modification Phosphoserine; by CDK1 and CDK2. Thr-170 is modified (phosphothreonine; by CDK2). Ser-321 is subject to Phosphoserine.

This sequence belongs to the protein kinase superfamily. CMGC Ser/Thr protein kinase family. CDC2/CDKX subfamily. Associates primarily with cyclin-H (CCNH) and MAT1 to form the CAK complex. CAK can further associate with the core-TFIIH to form the TFIIH basal transcription factor; this complex is sensitive to UV light. The CAK complex binds to p53/TP53 in response to DNA damage. Interacts with CDK2, SF1/NR5A1, PUF60 and PRKCI. Interacts with HINT1. Post-translationally, phosphorylation of Ser-164 during mitosis inactivates the enzyme. Phosphorylation of Thr-170 is required for activity. Phosphorylated at Ser-164 and Thr-170 by CDK2. As to expression, ubiquitous.

The protein resides in the nucleus. It localises to the cytoplasm. The protein localises to the perinuclear region. The enzyme catalyses L-seryl-[protein] + ATP = O-phospho-L-seryl-[protein] + ADP + H(+). It carries out the reaction L-threonyl-[protein] + ATP = O-phospho-L-threonyl-[protein] + ADP + H(+). It catalyses the reaction [DNA-directed RNA polymerase] + ATP = phospho-[DNA-directed RNA polymerase] + ADP + H(+). Its activity is regulated as follows. Inactivated by phosphorylation. Repressed by roscovitine (seliciclib, CYC202), R547 (Ro-4584820) and SNS-032 (BMS-387032). The association of p53/TP53 to the CAK complex in response to DNA damage reduces kinase activity toward CDK2 and RNA polymerase II repetitive C-terminal domain (CTD), thus stopping cell cycle progression. The inactivation by roscovitine promotes caspase-mediated apoptosis in leukemic cells. Specifically inactivated by THZ1. In terms of biological role, serine/threonine kinase involved in cell cycle control and in RNA polymerase II-mediated RNA transcription. Cyclin-dependent kinases (CDKs) are activated by the binding to a cyclin and mediate the progression through the cell cycle. Each different complex controls a specific transition between 2 subsequent phases in the cell cycle. Required for both activation and complex formation of CDK1/cyclin-B during G2-M transition, and for activation of CDK2/cyclins during G1-S transition (but not complex formation). CDK7 is the catalytic subunit of the CDK-activating kinase (CAK) complex. Phosphorylates SPT5/SUPT5H, SF1/NR5A1, POLR2A, p53/TP53, CDK1, CDK2, CDK4, CDK6 and CDK11B/CDK11. Initiates transcription by RNA polymerase II by mediating phosphorylation of POLR2A at 'Ser-5' of the repetitive C-terminal domain (CTD) when POLR2A is in complex with DNA, promoting dissociation from DNA and initiation. CAK activates the cyclin-associated kinases CDK1, CDK2, CDK4 and CDK6 by threonine phosphorylation, thus regulating cell cycle progression. CAK complexed to the core-TFIIH basal transcription factor activates RNA polymerase II by serine phosphorylation of the CTD of POLR2A, allowing its escape from the promoter and elongation of the transcripts. Its expression and activity are constant throughout the cell cycle. Upon DNA damage, triggers p53/TP53 activation by phosphorylation, but is inactivated in turn by p53/TP53; this feedback loop may lead to an arrest of the cell cycle and of the transcription, helping in cell recovery, or to apoptosis. Required for DNA-bound peptides-mediated transcription and cellular growth inhibition. In Homo sapiens (Human), this protein is Cyclin-dependent kinase 7 (CDK7).